The sequence spans 642 residues: MGHVDREDLLNVIRHELRLEDDDGPGLCSRLLLNPDRKCRAGGLPLDFRLKNGDLMDDGDAGFDDIYEIPLYEEPIHTRTLINDSLALRTAEKIKEEGRRDNFYTGPLDELFVKQEVNWPPKTPISTEKSAIERYLEENSANLNNPLGEYSKFAATTTDPSRQIEIIIPMSCDEEIGFKTLKIEVLTTARIREVIGYCLLQYYLTFDSYLPGEVDDYQFYLAEEDGEIEHELPPLDSSKLVGQVGFTCLGLVSRIKKNGNSRQKRAVAVWFVDKDQYVIEVDNMEKPLRWLRDEAFRLREETVKEREPLFQGLLDIKEYYMEAVDNFDVKLDLEASISSARSLEFVMIRKNSSRAGFHPRGGRYGRQMSAMLTLKMPNSPIAAGPMTPLPTVMEESPAVAGTSNGFGFPKAESCGAIASTPGVTWNDDGGQLSSFIVQRIHKFKPKWKANLIFRWTCFEIEKYREDRSAFLPQGYQKHTKVPWEYVGGVRTQLKDAKAGRVDMWQITFFWLPVLSDETVKDVIGDAEWNLNLVAKIYANEEKWRSVTLETFFKQDVDEIFSQTNSILQARDASIYKAFSHSSFGTLSPAASADLALMESAEAIVSPSSDAPSRSSNGKNGGKFRKMSSLMASVMGRRKSDSK.

In terms of domain architecture, CRIM spans 189-314 (ARIREVIGYC…EREPLFQGLL (126 aa)). Positions 603–642 (IVSPSSDAPSRSSNGKNGGKFRKMSSLMASVMGRRKSDSK) are disordered. The segment covering 605 to 615 (SPSSDAPSRSS) has biased composition (low complexity).

This sequence belongs to the SIN1 family. As to quaternary structure, component of the target of rapamycin complex 2 (TORC2).

Its function is as follows. Component of the target of rapamycin complex 2 (TORC2), which transduces signals from growth factors to pathways involved in proliferation, cytoskeletal organization and anabolic output. In response to growth factors, TORC2 phosphorylates and activates AGC protein kinase family members, such as Akt1. Within the TORC2 complex, sinh-1 acts as a substrate adapter which recognizes and binds AGC protein kinase family members for phosphorylation by mTor. This chain is Stress-activated map kinase-interacting protein 1 homolog (sinh-1), found in Caenorhabditis elegans.